The chain runs to 361 residues: Phospho-N-acetylmuramoyl-pentapeptide-transferase (361 aa).

Helical transmembrane passes span 28-48 (LAII…IKFL), 74-94 (TMGG…LADL), 99-119 (TWIT…DDYA), 133-153 (SKLL…EYLD), 168-188 (LSLD…VGSS), 203-223 (VPIA…GNLI), 236-256 (TGEL…FLWF), 263-283 (VFMG…ISVI), 288-308 (IVLA…ILQV), and 338-358 (KVVI…LSSL).

The protein belongs to the glycosyltransferase 4 family. MraY subfamily. It depends on Mg(2+) as a cofactor.

Its subcellular location is the cell inner membrane. The catalysed reaction is UDP-N-acetyl-alpha-D-muramoyl-L-alanyl-gamma-D-glutamyl-meso-2,6-diaminopimeloyl-D-alanyl-D-alanine + di-trans,octa-cis-undecaprenyl phosphate = di-trans,octa-cis-undecaprenyl diphospho-N-acetyl-alpha-D-muramoyl-L-alanyl-D-glutamyl-meso-2,6-diaminopimeloyl-D-alanyl-D-alanine + UMP. It participates in cell wall biogenesis; peptidoglycan biosynthesis. Functionally, catalyzes the initial step of the lipid cycle reactions in the biosynthesis of the cell wall peptidoglycan: transfers peptidoglycan precursor phospho-MurNAc-pentapeptide from UDP-MurNAc-pentapeptide onto the lipid carrier undecaprenyl phosphate, yielding undecaprenyl-pyrophosphoryl-MurNAc-pentapeptide, known as lipid I. The protein is Phospho-N-acetylmuramoyl-pentapeptide-transferase of Rickettsia massiliae (strain Mtu5).